A 428-amino-acid polypeptide reads, in one-letter code: 3-phosphoshikimate 1-carboxyvinyltransferase (428 aa).

3-phosphoshikimate-binding residues include Lys-21, Ser-22, and Arg-26. Lys-21 is a phosphoenolpyruvate binding site. 2 residues coordinate phosphoenolpyruvate: Gly-91 and Arg-119. Positions 164, 166, 313, and 340 each coordinate 3-phosphoshikimate. Gln-166 is a binding site for phosphoenolpyruvate. Catalysis depends on Asp-313, which acts as the Proton acceptor. Residues Arg-344 and Arg-386 each contribute to the phosphoenolpyruvate site.

This sequence belongs to the EPSP synthase family. Monomer.

It localises to the cytoplasm. It carries out the reaction 3-phosphoshikimate + phosphoenolpyruvate = 5-O-(1-carboxyvinyl)-3-phosphoshikimate + phosphate. It participates in metabolic intermediate biosynthesis; chorismate biosynthesis; chorismate from D-erythrose 4-phosphate and phosphoenolpyruvate: step 6/7. Catalyzes the transfer of the enolpyruvyl moiety of phosphoenolpyruvate (PEP) to the 5-hydroxyl of shikimate-3-phosphate (S3P) to produce enolpyruvyl shikimate-3-phosphate and inorganic phosphate. The sequence is that of 3-phosphoshikimate 1-carboxyvinyltransferase from Campylobacter jejuni subsp. jejuni serotype O:23/36 (strain 81-176).